The following is a 1022-amino-acid chain: Probable E3 ubiquitin-protein ligase HERC6 (1022 aa).

RCC1 repeat units follow at residues 41-92, 93-145, 147-198, 200-253, and 254-304; these read NHRV…AVCH, KGRV…ALSK, SQVF…ALSL, GTSF…VLTQ, and DGKV…AYVH. An HECT domain is found at 693–1017; it reads EATDFCKVLV…INNNRGFVSP (325 aa). C985 serves as the catalytic Glycyl thioester intermediate.

Detected in brain, heart, placenta and testis.

Its subcellular location is the cytoplasm. It localises to the cytosol. The catalysed reaction is S-ubiquitinyl-[E2 ubiquitin-conjugating enzyme]-L-cysteine + [acceptor protein]-L-lysine = [E2 ubiquitin-conjugating enzyme]-L-cysteine + N(6)-ubiquitinyl-[acceptor protein]-L-lysine.. The protein operates within protein modification; protein ubiquitination. E3 ubiquitin-protein ligase which accepts ubiquitin from an E2 ubiquitin-conjugating enzyme in the form of a thioester and then directly transfers the ubiquitin to targeted substrates. The chain is Probable E3 ubiquitin-protein ligase HERC6 (HERC6) from Homo sapiens (Human).